A 64-amino-acid chain; its full sequence is Frontoxin IV (64 aa).

5 cysteine pairs are disulfide-bonded: cysteine 3/cysteine 24, cysteine 6/cysteine 11, cysteine 17/cysteine 41, cysteine 45/cysteine 57, and cysteine 58/cysteine 63.

As to expression, expressed by the venom gland.

The protein resides in the secreted. Functionally, produces peripheral paralysis by blocking neuromuscular transmission at the postsynaptic site. Binds to the muscular nicotinic acetylcholine receptor (nAChR). The protein is Frontoxin IV of Micrurus frontalis (Coral snake).